We begin with the raw amino-acid sequence, 278 residues long: Octanoyl-[GcvH]:protein N-octanoyltransferase (278 aa).

The BPL/LPL catalytic domain occupies 41–247; it reads LVSPPTIRTW…LLHRLAGEVH (207 aa). The active-site Acyl-thioester intermediate is Cys-146.

The protein belongs to the octanoyltransferase LipL family.

It carries out the reaction N(6)-octanoyl-L-lysyl-[glycine-cleavage complex H protein] + L-lysyl-[lipoyl-carrier protein] = N(6)-octanoyl-L-lysyl-[lipoyl-carrier protein] + L-lysyl-[glycine-cleavage complex H protein]. The protein operates within protein modification; protein lipoylation via endogenous pathway; protein N(6)-(lipoyl)lysine from octanoyl-[acyl-carrier-protein]. Functionally, catalyzes the amidotransfer (transamidation) of the octanoyl moiety from octanoyl-GcvH to the lipoyl domain of the E2 subunit of lipoate-dependent enzymes. In Lysinibacillus sphaericus (strain C3-41), this protein is Octanoyl-[GcvH]:protein N-octanoyltransferase.